We begin with the raw amino-acid sequence, 113 residues long: Flagellar hook-basal body complex protein FliE (113 aa).

It belongs to the FliE family.

The protein localises to the bacterial flagellum basal body. In Rhizobium etli (strain ATCC 51251 / DSM 11541 / JCM 21823 / NBRC 15573 / CFN 42), this protein is Flagellar hook-basal body complex protein FliE.